The sequence spans 274 residues: Dermonecrotic toxin SdSicTox-betaIIB1biii (274 aa).

Residue H5 is part of the active site. 2 residues coordinate Mg(2+): E25 and D27. Catalysis depends on H41, which acts as the Nucleophile. 2 disulfide bridges follow: C45-C51 and C47-C190. D85 is a binding site for Mg(2+).

This sequence belongs to the arthropod phospholipase D family. Class II subfamily. Mg(2+) serves as cofactor. As to expression, expressed by the venom gland.

The protein resides in the secreted. It catalyses the reaction an N-(acyl)-sphingosylphosphocholine = an N-(acyl)-sphingosyl-1,3-cyclic phosphate + choline. The enzyme catalyses an N-(acyl)-sphingosylphosphoethanolamine = an N-(acyl)-sphingosyl-1,3-cyclic phosphate + ethanolamine. It carries out the reaction a 1-acyl-sn-glycero-3-phosphocholine = a 1-acyl-sn-glycero-2,3-cyclic phosphate + choline. The catalysed reaction is a 1-acyl-sn-glycero-3-phosphoethanolamine = a 1-acyl-sn-glycero-2,3-cyclic phosphate + ethanolamine. Its function is as follows. Dermonecrotic toxins cleave the phosphodiester linkage between the phosphate and headgroup of certain phospholipids (sphingolipid and lysolipid substrates), forming an alcohol (often choline) and a cyclic phosphate. This toxin acts on sphingomyelin (SM). It may also act on ceramide phosphoethanolamine (CPE), lysophosphatidylcholine (LPC) and lysophosphatidylethanolamine (LPE), but not on lysophosphatidylserine (LPS), and lysophosphatidylglycerol (LPG). It acts by transphosphatidylation, releasing exclusively cyclic phosphate products as second products. Induces dermonecrosis, hemolysis, increased vascular permeability, edema, inflammatory response, and platelet aggregation. This chain is Dermonecrotic toxin SdSicTox-betaIIB1biii, found in Sicarius cf. damarensis (strain GJB-2008) (Six-eyed sand spider).